The primary structure comprises 342 residues: D-alanine--D-alanine ligase (342 aa).

The ATP-grasp domain maps to 132-326 (KLYAKECGIE…VAKHLPKSKN (195 aa)). An ATP-binding site is contributed by 159-210 (EYPVIIKPNHLGSSIGVSVVYDSSELEYALDVAFEFDDEVLIEPFIEGIEEY). Mg(2+)-binding residues include aspartate 282, glutamate 294, and asparagine 296.

Belongs to the D-alanine--D-alanine ligase family. Mg(2+) serves as cofactor. It depends on Mn(2+) as a cofactor.

The protein localises to the cytoplasm. The enzyme catalyses 2 D-alanine + ATP = D-alanyl-D-alanine + ADP + phosphate + H(+). Its pathway is cell wall biogenesis; peptidoglycan biosynthesis. In terms of biological role, cell wall formation. The polypeptide is D-alanine--D-alanine ligase (Nitratiruptor sp. (strain SB155-2)).